Consider the following 149-residue polypeptide: Putative pre-16S rRNA nuclease (149 aa).

The protein belongs to the YqgF nuclease family.

The protein localises to the cytoplasm. Its function is as follows. Could be a nuclease involved in processing of the 5'-end of pre-16S rRNA. The protein is Putative pre-16S rRNA nuclease of Synechococcus sp. (strain ATCC 27144 / PCC 6301 / SAUG 1402/1) (Anacystis nidulans).